The sequence spans 585 residues: Pyruvate kinase (585 aa).

Arginine 32 lines the substrate pocket. K(+) is bound by residues asparagine 34, serine 36, aspartate 66, and threonine 67. 34–37 (NFSH) contributes to the ATP binding site. Positions 73 and 156 each coordinate ATP. Glutamate 221 serves as a coordination point for Mg(2+). 3 residues coordinate substrate: glycine 244, aspartate 245, and threonine 277. Aspartate 245 contributes to the Mg(2+) binding site.

The protein belongs to the pyruvate kinase family. This sequence in the C-terminal section; belongs to the PEP-utilizing enzyme family. Mg(2+) is required as a cofactor. It depends on K(+) as a cofactor.

It carries out the reaction pyruvate + ATP = phosphoenolpyruvate + ADP + H(+). Its pathway is carbohydrate degradation; glycolysis; pyruvate from D-glyceraldehyde 3-phosphate: step 5/5. This Staphylococcus epidermidis (strain ATCC 35984 / DSM 28319 / BCRC 17069 / CCUG 31568 / BM 3577 / RP62A) protein is Pyruvate kinase (pyk).